The sequence spans 297 residues: Phosphoribosylaminoimidazole-succinocarboxamide synthase (297 aa).

Belongs to the SAICAR synthetase family.

The enzyme catalyses 5-amino-1-(5-phospho-D-ribosyl)imidazole-4-carboxylate + L-aspartate + ATP = (2S)-2-[5-amino-1-(5-phospho-beta-D-ribosyl)imidazole-4-carboxamido]succinate + ADP + phosphate + 2 H(+). The protein operates within purine metabolism; IMP biosynthesis via de novo pathway; 5-amino-1-(5-phospho-D-ribosyl)imidazole-4-carboxamide from 5-amino-1-(5-phospho-D-ribosyl)imidazole-4-carboxylate: step 1/2. The chain is Phosphoribosylaminoimidazole-succinocarboxamide synthase (purC) from Mycobacterium leprae (strain TN).